The sequence spans 355 residues: MTSLLFLVLISVCWAEPHPDNSSLEHERIIHIQEENGPRLLVVAEQAKIFSQRGGNVTLPCKFYHEHTSTAGSGTHKIRVKWTKLTSDYLKEVDVFVAMGHHRKSYGKYQGRVFLRESSENDASLIITNIMLEDYGRYKCEVIEGLEDDTAVVALNLEGVVFPYSPRLGRYNLNFHEAQQACLDQDSIIASFDQLYEAWRSGLDWCNAGWLSDGSVQYPITKPREPCGGKNTVPGVRNYGFWDKERSRYDVFCFTSNFNGRFYYLIHPTKLTYDEAVQACLKDGAQIAKVGQIFAAWKLLGYDRCDAGWLADGSVRYPISRPRKRCSPNEAAVRFVGFPDKKHKLYGVYCFRAYN.

Residues 1 to 9 (MTSLLFLVL) constitute a propeptide that is removed on maturation. 2 N-linked (GlcNAc...) asparagine glycosylation sites follow: Asn-21 and Asn-56. Positions 38-156 (PRLLVVAEQA…EDDTAVVALN (119 aa)) constitute an Ig-like V-type domain. Disulfide bonds link Cys-61-Cys-140, Cys-182-Cys-253, Cys-206-Cys-227, Cys-280-Cys-350, and Cys-305-Cys-326. Link domains are found at residues 160-255 (VVFP…FCFT) and 260-352 (GRFY…YCFR).

It belongs to the HAPLN family.

It localises to the secreted. Its subcellular location is the extracellular space. The protein resides in the extracellular matrix. Its function is as follows. Stabilizes the aggregates of proteoglycan monomers with hyaluronic acid in the extracellular cartilage matrix. This chain is Hyaluronan and proteoglycan link protein 1 (HAPLN1), found in Gallus gallus (Chicken).